Reading from the N-terminus, the 95-residue chain is Small ribosomal subunit protein uS19 (95 aa).

This sequence belongs to the universal ribosomal protein uS19 family.

Protein S19 forms a complex with S13 that binds strongly to the 16S ribosomal RNA. The sequence is that of Small ribosomal subunit protein uS19 from Roseiflexus castenholzii (strain DSM 13941 / HLO8).